The chain runs to 430 residues: Enolase (430 aa).

Gln163 is a (2R)-2-phosphoglycerate binding site. Glu205 acts as the Proton donor in catalysis. Asp242, Glu287, and Asp314 together coordinate Mg(2+). (2R)-2-phosphoglycerate contacts are provided by Lys339, Arg368, Ser369, and Lys390. Lys339 (proton acceptor) is an active-site residue.

Belongs to the enolase family. It depends on Mg(2+) as a cofactor.

Its subcellular location is the cytoplasm. It localises to the secreted. It is found in the cell surface. It catalyses the reaction (2R)-2-phosphoglycerate = phosphoenolpyruvate + H2O. Its pathway is carbohydrate degradation; glycolysis; pyruvate from D-glyceraldehyde 3-phosphate: step 4/5. Its function is as follows. Catalyzes the reversible conversion of 2-phosphoglycerate (2-PG) into phosphoenolpyruvate (PEP). It is essential for the degradation of carbohydrates via glycolysis. The chain is Enolase from Exiguobacterium sibiricum (strain DSM 17290 / CCUG 55495 / CIP 109462 / JCM 13490 / 255-15).